A 158-amino-acid chain; its full sequence is F(420)H(2) dehydrogenase subunit C (158 aa).

It belongs to the complex I 30 kDa subunit family. The FPO complex is composed of at least 13 different subunits.

It is found in the cell membrane. It carries out the reaction methanophenazine + reduced coenzyme F420-(gamma-L-Glu)(n) = dihydromethanophenazine + oxidized coenzyme F420-(gamma-L-Glu)(n) + H(+). Component of the F(420)H(2) dehydrogenase (FPO complex) which is part of the energy-conserving F(420)H(2):heterodisulfide oxidoreductase system. The membrane-bound electron transfer system of the complex plays an important role in the metabolism of methylotrophic methanogens when the organisms grow on methanol or methylamines. Catalyzes the oxidation of methanophenazine to dihydromethanophenazine. It shuttles electrons from F(420)H(2), via FAD and iron-sulfur (Fe-S) centers, to methanophenazine (an electron carrier in the membrane). It couples the redox reaction to proton translocation (for every two electrons transferred, two hydrogen ions are translocated across the cytoplasmic membrane), and thus conserves the redox energy in a proton gradient. It also catalyzes the oxidation of F(420)H(2) with quinones such as 2,3-dimethyl-1,4-naphthoquinone, 2-methyl-1,4-naphthoquinone and tetramethyl-p-benzoquinone. In Methanosarcina mazei (strain ATCC BAA-159 / DSM 3647 / Goe1 / Go1 / JCM 11833 / OCM 88) (Methanosarcina frisia), this protein is F(420)H(2) dehydrogenase subunit C (fpoC).